A 349-amino-acid polypeptide reads, in one-letter code: 1-acylglycerol-3-phosphate O-acyltransferase ABHD5 (349 aa).

Position 2 is an N-acetylalanine (alanine 2). The region spanning proline 77–arginine 184 is the AB hydrolase-1 domain. At serine 122 the chain carries Phosphoserine. Residues histidine 327 to aspartate 332 carry the HXXXXD motif motif.

The protein belongs to the peptidase S33 family. ABHD4/ABHD5 subfamily. As to quaternary structure, interacts with ADRP, PLIN and PNPLA2. Interacts with PLIN5; promotes interaction with PNPLA2.

The protein localises to the cytoplasm. It is found in the lipid droplet. It catalyses the reaction a 1-acyl-sn-glycero-3-phosphate + an acyl-CoA = a 1,2-diacyl-sn-glycero-3-phosphate + CoA. It carries out the reaction 1-(9Z-octadecenoyl)-sn-glycero-3-phosphate + (9Z)-octadecenoyl-CoA = 1,2-di-(9Z-octadecenoyl)-sn-glycero-3-phosphate + CoA. The enzyme catalyses 1-(9Z-octadecenoyl)-sn-glycero-3-phosphate + hexadecanoyl-CoA = 1-(9Z)-octadecenoyl-2-hexadecanoyl-sn-glycero-3-phosphate + CoA. The catalysed reaction is 1-(9Z-octadecenoyl)-sn-glycero-3-phosphate + octadecanoyl-CoA = 1-(9Z-octadecenoyl)-2-octadecanoyl-sn-glycero-3-phosphate + CoA. It catalyses the reaction 1-(9Z-octadecenoyl)-sn-glycero-3-phosphate + (5Z,8Z,11Z,14Z)-eicosatetraenoyl-CoA = 1-(9Z)-octadecenoyl-2-(5Z,8Z,11Z,14Z)-eicosatetraenoyl-sn-glycero-3-phosphate + CoA. It carries out the reaction eicosanoyl-CoA + 1-(9Z-octadecenoyl)-sn-glycero-3-phosphate = 1-(9Z)-octadecenoyl-2-eicosanoyl-sn-glycero-3-phosphate + CoA. The enzyme catalyses 1-hexadecanoyl-sn-glycero-3-phosphate + (9Z)-octadecenoyl-CoA = 1-hexadecanoyl-2-(9Z-octadecenoyl)-sn-glycero-3-phosphate + CoA. The catalysed reaction is 1-octadecanoyl-sn-glycero-3-phosphate + (9Z)-octadecenoyl-CoA = 1-octadecanoyl-2-(9Z-octadecenoyl)-sn-glycero-3-phosphate + CoA. It catalyses the reaction 1-(5Z,8Z,11Z,14Z-eicosatetraenoyl)-sn-glycero-3-phosphate + (9Z)-octadecenoyl-CoA = 1-(5Z,8Z,11Z,14Z)-eicosatetraenoyl-2-(9Z)-octadecenoyl-sn-glycero-3-phosphate + CoA. Its activity is regulated as follows. Acyltransferase activity is inhibited by detergents such as Triton X-100 and 3-[(3-cholamidopropyl)dimethylammonio]-1-propanesulfonate (CHAPS). Acyltransferase activity is inhibited by the presence of magnesium and calcium. Functionally, coenzyme A-dependent lysophosphatidic acid acyltransferase that catalyzes the transfer of an acyl group on a lysophosphatidic acid. Functions preferentially with 1-oleoyl-lysophosphatidic acid followed by 1-palmitoyl-lysophosphatidic acid, 1-stearoyl-lysophosphatidic acid and 1-arachidonoyl-lysophosphatidic acid as lipid acceptor. Functions preferentially with arachidonoyl-CoA followed by oleoyl-CoA as acyl group donors. Functions in phosphatidic acid biosynthesis. May regulate the cellular storage of triacylglycerol through activation of the phospholipase PNPLA2. Involved in keratinocyte differentiation. Regulates lipid droplet fusion. This Pongo abelii (Sumatran orangutan) protein is 1-acylglycerol-3-phosphate O-acyltransferase ABHD5.